We begin with the raw amino-acid sequence, 207 residues long: Guanylate kinase (207 aa).

The 180-residue stretch at 5–184 (GNLFIVSAPS…ALADLRAIIR (180 aa)) folds into the Guanylate kinase-like domain. Position 12 to 19 (12 to 19 (APSGAGKS)) interacts with ATP.

The protein belongs to the guanylate kinase family.

The protein localises to the cytoplasm. The enzyme catalyses GMP + ATP = GDP + ADP. Functionally, essential for recycling GMP and indirectly, cGMP. In Shewanella sp. (strain MR-7), this protein is Guanylate kinase.